A 104-amino-acid chain; its full sequence is Protein U9 (104 aa).

This is Protein U9 (U9) from Homo sapiens (Human).